A 453-amino-acid chain; its full sequence is Tubulin alpha chain (453 aa).

Q11 lines the GTP pocket. K40 is subject to N6-acetyllysine. 6 residues coordinate GTP: E71, G144, T145, T179, N206, and N228. Mg(2+) is bound at residue E71. The active site involves E254.

Belongs to the tubulin family. As to quaternary structure, dimer of alpha and beta chains. A typical microtubule is a hollow water-filled tube with an outer diameter of 25 nm and an inner diameter of 15 nM. Alpha-beta heterodimers associate head-to-tail to form protofilaments running lengthwise along the microtubule wall with the beta-tubulin subunit facing the microtubule plus end conferring a structural polarity. Microtubules usually have 13 protofilaments but different protofilament numbers can be found in some organisms and specialized cells. It depends on Mg(2+) as a cofactor. Post-translationally, undergoes a tyrosination/detyrosination cycle, the cyclic removal and re-addition of a C-terminal tyrosine residue by the enzymes tubulin tyrosine carboxypeptidase (TTCP) and tubulin tyrosine ligase (TTL), respectively. Acetylation of alpha chains at Lys-40 stabilizes microtubules and affects affinity and processivity of microtubule motors. This modification has a role in multiple cellular functions, ranging from cell motility, cell cycle progression or cell differentiation to intracellular trafficking and signaling.

Its subcellular location is the cytoplasm. It is found in the cytoskeleton. It carries out the reaction GTP + H2O = GDP + phosphate + H(+). Functionally, tubulin is the major constituent of microtubules, a cylinder consisting of laterally associated linear protofilaments composed of alpha- and beta-tubulin heterodimers. Microtubules grow by the addition of GTP-tubulin dimers to the microtubule end, where a stabilizing cap forms. Below the cap, tubulin dimers are in GDP-bound state, owing to GTPase activity of alpha-tubulin. This chain is Tubulin alpha chain, found in Plasmodium falciparum (isolate K1 / Thailand).